The chain runs to 450 residues: Glucose-6-phosphate isomerase (450 aa).

The active-site Proton donor is Glu291. Active-site residues include His312 and Lys426.

The protein belongs to the GPI family.

The protein resides in the cytoplasm. It carries out the reaction alpha-D-glucose 6-phosphate = beta-D-fructose 6-phosphate. It participates in carbohydrate biosynthesis; gluconeogenesis. It functions in the pathway carbohydrate degradation; glycolysis; D-glyceraldehyde 3-phosphate and glycerone phosphate from D-glucose: step 2/4. Its function is as follows. Catalyzes the reversible isomerization of glucose-6-phosphate to fructose-6-phosphate. The protein is Glucose-6-phosphate isomerase of Clostridium novyi (strain NT).